The sequence spans 89 residues: Large ribosomal subunit protein bL27 (89 aa).

Residues 1–21 (MAHKKSGGSSSNGRDSESKRL) form a disordered region.

Belongs to the bacterial ribosomal protein bL27 family.

This chain is Large ribosomal subunit protein bL27, found in Caulobacter vibrioides (strain NA1000 / CB15N) (Caulobacter crescentus).